The chain runs to 584 residues: MAAPLAQLRDRFQAALAASFGPEWAATDPLLVPATNPKFGDYQSNVAMSLAKQLGQPPRAIAETLVQNLNLADLCEPPAIAGPGFINFTLQPSYLVAQLQQLQTDERLGIQPVSPPQRVIVDFSSPNIAKEMHVGHLRSTIIGDSIARVLEFQGHEVLRLNHVGDWGTQFGMLIAFLQEQYPQALSQPDALDISDLVAFYKQAKARFDEDPSFQETARQRVVDLQSGEATARQAWQLLCDQSRREFQKIYDRLDIQLEERGESFYNPYLPAIVEDLRRLGLLVEDQGAQCVFLEGFQNKEGQPLPLIVQKSDGGYNYATTDLAALRYRLGQDQAQRIIYVTDSGQANHFAQVFQVAQRAGWLPAAAQIEHVPFGLVQGEDGKKLKTRAGDTVRLRDLLDEAVDRARTDLTTRIAAEERSETPEFIEAVAQAVGLGAVKYADLSQNRNSNYIFSFDKMLALQGNTAPYLLYAYVRIQGIARKGGIDFAQLDPVAAVLTEPTERSLAKQVLQLGEVLDEVARDLLPNRLCSYLFELSQTFNQFYDRCPILNAEEPQRTSRLLLCDLTARTLKLGLSLLGISVLERM.

The 'HIGH' region signature appears at 126–136 (PNIAKEMHVGH).

This sequence belongs to the class-I aminoacyl-tRNA synthetase family. As to quaternary structure, monomer.

Its subcellular location is the cytoplasm. The enzyme catalyses tRNA(Arg) + L-arginine + ATP = L-arginyl-tRNA(Arg) + AMP + diphosphate. This Synechococcus elongatus (strain ATCC 33912 / PCC 7942 / FACHB-805) (Anacystis nidulans R2) protein is Arginine--tRNA ligase.